We begin with the raw amino-acid sequence, 348 residues long: Nitrogenase vanadium-iron protein beta chain (348 aa).

4 residues coordinate [8Fe-7S] cluster: Cys-31, Cys-56, Cys-115, and Ser-153.

It belongs to the NifD/NifK/NifE/NifN family. Hexamer of two alpha, two beta, and two delta chains. [8Fe-7S] cluster is required as a cofactor.

The catalysed reaction is N2 + 8 reduced [2Fe-2S]-[ferredoxin] + 16 ATP + 16 H2O = H2 + 8 oxidized [2Fe-2S]-[ferredoxin] + 2 NH4(+) + 16 ADP + 16 phosphate + 6 H(+). In terms of biological role, this vanadium-iron protein is part of the nitrogenase complex that catalyzes the key enzymatic reactions in nitrogen fixation. The polypeptide is Nitrogenase vanadium-iron protein beta chain (vnfK) (Azorhizophilus paspali (Azotobacter paspali)).